The primary structure comprises 405 residues: Tryptophan synthase beta chain (405 aa).

N6-(pyridoxal phosphate)lysine is present on Lys-96.

Belongs to the TrpB family. Tetramer of two alpha and two beta chains. Requires pyridoxal 5'-phosphate as cofactor.

The enzyme catalyses (1S,2R)-1-C-(indol-3-yl)glycerol 3-phosphate + L-serine = D-glyceraldehyde 3-phosphate + L-tryptophan + H2O. The protein operates within amino-acid biosynthesis; L-tryptophan biosynthesis; L-tryptophan from chorismate: step 5/5. The beta subunit is responsible for the synthesis of L-tryptophan from indole and L-serine. The protein is Tryptophan synthase beta chain of Clostridium botulinum (strain Eklund 17B / Type B).